The chain runs to 134 residues: Profilin-1 (134 aa).

Residues Cys-13 and Cys-118 are joined by a disulfide bond. The Involved in PIP2 interaction signature appears at 84 to 100 (AVIRGKKGSGGITTKKT). Thr-114 carries the post-translational modification Phosphothreonine.

The protein belongs to the profilin family. As to quaternary structure, occurs in many kinds of cells as a complex with monomeric actin in a 1:1 ratio. Post-translationally, phosphorylated by MAP kinases.

It localises to the cytoplasm. It is found in the cytoskeleton. In terms of biological role, binds to actin and affects the structure of the cytoskeleton. At high concentrations, profilin prevents the polymerization of actin, whereas it enhances it at low concentrations. The protein is Profilin-1 of Olea europaea (Common olive).